The chain runs to 116 residues: UPF0127 protein PF1050 (116 aa).

This sequence belongs to the UPF0127 family.

The polypeptide is UPF0127 protein PF1050 (Pyrococcus furiosus (strain ATCC 43587 / DSM 3638 / JCM 8422 / Vc1)).